Reading from the N-terminus, the 554-residue chain is Sesquiterpene synthase 14b (554 aa).

Mg(2+) contacts are provided by aspartate 305, aspartate 309, aspartate 449, and glutamate 457. The short motif at 305–309 (DDLYD) is the DDXXD motif element.

It belongs to the terpene synthase family. Tpsa subfamily. Requires Mg(2+) as cofactor. Mn(2+) serves as cofactor.

The catalysed reaction is (2E,6E)-farnesyl diphosphate = (E)-gamma-bisabolene + diphosphate. The enzyme catalyses (2Z,6Z)-farnesyl diphosphate = (E)-gamma-bisabolene + diphosphate. It carries out the reaction (2Z,6Z)-farnesyl diphosphate = (E)-alpha-bisabolene + diphosphate. It catalyses the reaction (2Z,6Z)-farnesyl diphosphate = (Z)-beta-farnesene + diphosphate. The catalysed reaction is (2E,6E)-farnesyl diphosphate = (E)-beta-farnesene + diphosphate. The enzyme catalyses (2E,6E)-farnesyl diphosphate = (+)-thujopsene + diphosphate. It carries out the reaction (2Z,6Z)-farnesyl diphosphate = (E)-beta-farnesene + diphosphate. It catalyses the reaction (2E,6E)-farnesyl diphosphate = (Z)-beta-farnesene + diphosphate. The catalysed reaction is (2Z,6Z)-farnesyl diphosphate = beta-acoradiene + diphosphate. The enzyme catalyses (2Z,6Z)-farnesyl diphosphate = alpha-acoradiene + diphosphate. It carries out the reaction (2Z,6Z)-farnesyl diphosphate = beta-bisabolene + diphosphate. It catalyses the reaction (2E,6E)-farnesyl diphosphate = (-)-alpha-cedrene + diphosphate. The catalysed reaction is (2E,6E)-farnesyl diphosphate = beta-bisabolene + diphosphate. The enzyme catalyses (2E,6E)-farnesyl diphosphate = beta-acoradiene + diphosphate. It carries out the reaction (2Z,6Z)-farnesyl diphosphate = (-)-alpha-cedrene + diphosphate. It catalyses the reaction (2E)-geranyl diphosphate = terpinolene + diphosphate. The catalysed reaction is (2E)-geranyl diphosphate = limonene + diphosphate. The enzyme catalyses (2E)-geranyl diphosphate = beta-myrcene + diphosphate. Its pathway is secondary metabolite biosynthesis; terpenoid biosynthesis. Functionally, sesquiterpene synthase involved in the biosynthesis of volatile compounds. Mediates the conversion of (2E,6E)-farnesyl diphosphate ((EE)-FPP) into (+)-thujopsene, beta-bisabolene, alpha-cederene, beta-acoradiene, (E)-gamma-bisabolene, (Z)-alpha-bisabolene, (Z)-beta-farnesene and (E)-beta-farnesene, and of (2Z,6Z)-farnesyl diphosphate ((ZZ)-FPP) into (E)-gamma-bisabolene, (E)-alpha-bisabolene, (E)-beta-farnesene, (Z)-beta-farnesene, beta-bisabolene, beta-acoradiene and alpha-acoradiene. Can act with a low efficiency as a monoterpene synthase with geranyl diphosphate (GPP) as substrate, thus producing beta-myrcene, limonene and terpinolene. In Solanum habrochaites (Wild tomato), this protein is Sesquiterpene synthase 14b.